The sequence spans 445 residues: MDIRQVRETVEMIEEQHFDIRTITMGISLLDCVDSDIDRAAAKIYQKITTKAANLVAVGDDIAAELGIPIVNKRVSVTPIALIGAATDAEDYLPLAKALDQAACDIGVDFIGGFSALVQKGYQKGDKILIESIPQALAQTKKVCASVNVGSTRSGINMTAVADMGRIIKETAKASEMGAAKLVVFANAVEDNPFMAGAFHGVGEADTVINVGVSGPGVVKRALEKVRGESFDVLAETVKKTAFKITRIGQLVGQMASERLGVGFGVVDLSLAPTPAVGDSVARVLEEMGLEMVGTHGTAAALALLNDAVKKGGVMACNRVGGLSGAFIPVSEDEGMIAAVQGGSLNLEKLEAMTAICSVGLDMIAIPEETPSETIAAMIADEAAIGVINQKTTAVRIIPKGKEGDMIAFGGLLGTAPVMPVNPHSSLEFIARGGQIPAPIHSFKN.

Belongs to the UPF0210 family. In terms of assembly, homodimer.

This Streptococcus equi subsp. zooepidemicus (strain H70) protein is UPF0210 protein SZO_15840.